The primary structure comprises 379 residues: Queuine tRNA-ribosyltransferase (379 aa).

Catalysis depends on Asp93, which acts as the Proton acceptor. Substrate-binding positions include 93-97 (DSGGF), Asp147, Gln191, and Gly218. The RNA binding stretch occupies residues 249 to 255 (GVGKPED). The active-site Nucleophile is the Asp268. The segment at 273–277 (TRNAR) is RNA binding; important for wobble base 34 recognition. 4 residues coordinate Zn(2+): Cys306, Cys308, Cys311, and His337.

It belongs to the queuine tRNA-ribosyltransferase family. As to quaternary structure, homodimer. Within each dimer, one monomer is responsible for RNA recognition and catalysis, while the other monomer binds to the replacement base PreQ1. It depends on Zn(2+) as a cofactor.

The catalysed reaction is 7-aminomethyl-7-carbaguanine + guanosine(34) in tRNA = 7-aminomethyl-7-carbaguanosine(34) in tRNA + guanine. It functions in the pathway tRNA modification; tRNA-queuosine biosynthesis. Its function is as follows. Catalyzes the base-exchange of a guanine (G) residue with the queuine precursor 7-aminomethyl-7-deazaguanine (PreQ1) at position 34 (anticodon wobble position) in tRNAs with GU(N) anticodons (tRNA-Asp, -Asn, -His and -Tyr). Catalysis occurs through a double-displacement mechanism. The nucleophile active site attacks the C1' of nucleotide 34 to detach the guanine base from the RNA, forming a covalent enzyme-RNA intermediate. The proton acceptor active site deprotonates the incoming PreQ1, allowing a nucleophilic attack on the C1' of the ribose to form the product. After dissociation, two additional enzymatic reactions on the tRNA convert PreQ1 to queuine (Q), resulting in the hypermodified nucleoside queuosine (7-(((4,5-cis-dihydroxy-2-cyclopenten-1-yl)amino)methyl)-7-deazaguanosine). This Actinobacillus succinogenes (strain ATCC 55618 / DSM 22257 / CCUG 43843 / 130Z) protein is Queuine tRNA-ribosyltransferase.